The sequence spans 243 residues: Triosephosphate isomerase (243 aa).

9-11 (NWK) contributes to the substrate binding site. The active-site Electrophile is H96. Residue E165 is the Proton acceptor of the active site. Substrate is bound by residues G171, S204, and 225–226 (GG).

This sequence belongs to the triosephosphate isomerase family. In terms of assembly, homodimer.

Its subcellular location is the cytoplasm. The enzyme catalyses D-glyceraldehyde 3-phosphate = dihydroxyacetone phosphate. The protein operates within carbohydrate biosynthesis; gluconeogenesis. It participates in carbohydrate degradation; glycolysis; D-glyceraldehyde 3-phosphate from glycerone phosphate: step 1/1. Involved in the gluconeogenesis. Catalyzes stereospecifically the conversion of dihydroxyacetone phosphate (DHAP) to D-glyceraldehyde-3-phosphate (G3P). This is Triosephosphate isomerase from Parasynechococcus marenigrum (strain WH8102).